A 389-amino-acid chain; its full sequence is Succinate--CoA ligase [ADP-forming] subunit beta (389 aa).

Positions Lys-9 to Thr-244 constitute an ATP-grasp domain. ATP contacts are provided by residues Lys-46, Gly-53 to Gly-55, Gly-102, and Glu-107. Asn-199 and Asp-213 together coordinate Mg(2+). Substrate is bound by residues Asn-264 and Gly-321 to Val-323.

This sequence belongs to the succinate/malate CoA ligase beta subunit family. Heterotetramer of two alpha and two beta subunits. It depends on Mg(2+) as a cofactor.

It carries out the reaction succinate + ATP + CoA = succinyl-CoA + ADP + phosphate. The catalysed reaction is GTP + succinate + CoA = succinyl-CoA + GDP + phosphate. Its pathway is carbohydrate metabolism; tricarboxylic acid cycle; succinate from succinyl-CoA (ligase route): step 1/1. Succinyl-CoA synthetase functions in the citric acid cycle (TCA), coupling the hydrolysis of succinyl-CoA to the synthesis of either ATP or GTP and thus represents the only step of substrate-level phosphorylation in the TCA. The beta subunit provides nucleotide specificity of the enzyme and binds the substrate succinate, while the binding sites for coenzyme A and phosphate are found in the alpha subunit. This is Succinate--CoA ligase [ADP-forming] subunit beta from Xanthomonas oryzae pv. oryzae (strain MAFF 311018).